A 252-amino-acid polypeptide reads, in one-letter code: Protein BTG3 (252 aa).

The segment at 138–162 (VTSDYHSGSSSSDEETSKEMEVKPS) is disordered.

Belongs to the BTG family. As to expression, ubiquitous. High expression in the ventricular zone of the developing central nervous system. High in ovary, testis, prostate, thymus and lung.

Overexpression impairs serum-induced cell cycle progression from the G0/G1 to S phase. The protein is Protein BTG3 (BTG3) of Homo sapiens (Human).